Consider the following 213-residue polypeptide: N-(5'-phosphoribosyl)anthranilate isomerase (213 aa).

This sequence belongs to the TrpF family.

It carries out the reaction N-(5-phospho-beta-D-ribosyl)anthranilate = 1-(2-carboxyphenylamino)-1-deoxy-D-ribulose 5-phosphate. It functions in the pathway amino-acid biosynthesis; L-tryptophan biosynthesis; L-tryptophan from chorismate: step 3/5. This chain is N-(5'-phosphoribosyl)anthranilate isomerase, found in Rhodopseudomonas palustris (strain TIE-1).